We begin with the raw amino-acid sequence, 146 residues long: Catabolic 3-dehydroquinase (146 aa).

Tyr-24 serves as the catalytic Proton acceptor. Residues Asn-78, His-84, and Asp-91 each contribute to the substrate site. Catalysis depends on His-104, which acts as the Proton donor. Residues 105-106 and Arg-115 contribute to the substrate site; that span reads IT.

The protein belongs to the type-II 3-dehydroquinase family. Homododecamer. Adopts a ring-like structure, composed of an arrangement of two hexameric rings stacked on top of one another.

The enzyme catalyses 3-dehydroquinate = 3-dehydroshikimate + H2O. It participates in aromatic compound metabolism; 3,4-dihydroxybenzoate biosynthesis; 3,4-dihydroxybenzoate from 3-dehydroquinate: step 1/2. Functionally, is involved in the catabolism of quinate. Allows the utilization of quinate as carbon source via the beta-ketoadipate pathway. This chain is Catabolic 3-dehydroquinase, found in Candida dubliniensis (strain CD36 / ATCC MYA-646 / CBS 7987 / NCPF 3949 / NRRL Y-17841) (Yeast).